Consider the following 273-residue polypeptide: Shikimate kinase (273 aa).

Residue 85–95 (PVGKGLKSSSA) coordinates ATP.

The protein belongs to the GHMP kinase family. Archaeal shikimate kinase subfamily.

It localises to the cytoplasm. It catalyses the reaction shikimate + ATP = 3-phosphoshikimate + ADP + H(+). It participates in metabolic intermediate biosynthesis; chorismate biosynthesis; chorismate from D-erythrose 4-phosphate and phosphoenolpyruvate: step 5/7. The chain is Shikimate kinase from Pyrococcus furiosus (strain ATCC 43587 / DSM 3638 / JCM 8422 / Vc1).